A 182-amino-acid polypeptide reads, in one-letter code: uncharacterized protein (182 aa).

Belongs to the mimivirus L28/L54 family.

This is an uncharacterized protein from Acanthamoeba polyphaga (Amoeba).